Consider the following 298-residue polypeptide: Probable prolyl 4-hydroxylase 4 (298 aa).

Residues Met1–Leu6 lie on the Cytoplasmic side of the membrane. The helical; Signal-anchor for type II membrane protein transmembrane segment at Leu7–Ile25 threads the bilayer. Residues Ser26–Cys298 are Lumenal-facing. Asn77 carries N-linked (GlcNAc...) asparagine glycosylation. Positions Asn120 to Val245 constitute a Fe2OG dioxygenase domain. 2 residues coordinate Fe cation: His138 and Asp140. An N-linked (GlcNAc...) asparagine glycan is attached at Asn164. Residue His226 participates in Fe cation binding. Lys236 serves as a coordination point for 2-oxoglutarate. N-linked (GlcNAc...) asparagine glycosylation is found at Asn257 and Asn262. A ShKT domain is found at Cys258 to Cys298. 3 disulfide bridges follow: Cys258/Cys298, Cys265/Cys291, and Cys274/Cys295.

It belongs to the P4HA family. Fe(2+) is required as a cofactor. L-ascorbate serves as cofactor.

It localises to the endoplasmic reticulum membrane. The catalysed reaction is L-prolyl-[collagen] + 2-oxoglutarate + O2 = trans-4-hydroxy-L-prolyl-[collagen] + succinate + CO2. In terms of biological role, catalyzes the post-translational formation of 4-hydroxyproline in -Xaa-Pro-Gly- sequences in proline-rich peptide sequences of plant glycoproteins and other proteins. Hydroxyprolines are important constituent of many plant cell wall glycoproteins such as extensins, hydroxyproline-rich glycoproteins, lectins and arabinogalactan proteins. In Arabidopsis thaliana (Mouse-ear cress), this protein is Probable prolyl 4-hydroxylase 4.